The primary structure comprises 872 residues: Alanine--tRNA ligase (872 aa).

Zn(2+)-binding residues include histidine 563, histidine 567, cysteine 665, and histidine 669.

It belongs to the class-II aminoacyl-tRNA synthetase family. The cofactor is Zn(2+).

The protein localises to the cytoplasm. It carries out the reaction tRNA(Ala) + L-alanine + ATP = L-alanyl-tRNA(Ala) + AMP + diphosphate. Its function is as follows. Catalyzes the attachment of alanine to tRNA(Ala) in a two-step reaction: alanine is first activated by ATP to form Ala-AMP and then transferred to the acceptor end of tRNA(Ala). Also edits incorrectly charged Ser-tRNA(Ala) and Gly-tRNA(Ala) via its editing domain. This chain is Alanine--tRNA ligase, found in Bacteroides thetaiotaomicron (strain ATCC 29148 / DSM 2079 / JCM 5827 / CCUG 10774 / NCTC 10582 / VPI-5482 / E50).